Here is a 314-residue protein sequence, read N- to C-terminus: Phospholipid phosphatase-related protein type 5 (314 aa).

6 consecutive transmembrane segments (helical) span residues 5-25 (FSLTIMLYFQMVIMAGTVMLA), 61-81 (IPPVLLLSLVTGVPVLVIIVG), 120-140 (FLGIYTFGLFATDIFVNAGQV), 194-214 (AALSVYAALYLAMYITSTIKA), 223-243 (VLCLGLMCLAFLTGINRVAEY), and 250-270 (VIAGFLIGISIAVFLVVCVVN).

Belongs to the PA-phosphatase related phosphoesterase family.

It localises to the cell membrane. Induces filopodia formation and promotes neurite growth. The chain is Phospholipid phosphatase-related protein type 5 from Xenopus laevis (African clawed frog).